The chain runs to 48 residues: Protein TUNAR (48 aa).

Residues methionine 1–glutamate 20 form a disordered region. Basic and acidic residues predominate over residues aspartate 8 to glutamate 20. A helical membrane pass occupies residues leucine 24–isoleucine 44.

Interacts with ATPase ATP2A2/SERCA2. Interacts with ATPase ATP2A3/SERCA3; the interaction occurs at low levels in low glucose conditions and is increased by high glucose levels. As to expression, in the adult, expressed in Purkinje cells in the cerebellum, in motor neurons and interneurons in the spinal cord and in neurons of the cortex, hippocampus and thalamus (at protein level). Also detected in the developing cortex, hippocampus and thalamus at embryonic day E15.5 (at protein level).

The protein resides in the endoplasmic reticulum membrane. It is found in the extracellular vesicle membrane. In terms of biological role, in neurons, plays a role in the regulation of intracellular Ca(2+), possibly by acting as an activator of ATP2A2/SERCA2, thus increasing the efficiency with which Ca(2+) is removed from the cytoplasm. Inhibits differentiation of embryonic stem cells into neurons and inhibits neurite outgrowth, likely as a result of its role in intracellular Ca(2+) regulation. In pancreatic beta cells, lowers Ca(2+) levels in the endoplasmic reticulum and enhances glucose-stimulated insulin secretion. The protein is Protein TUNAR of Mus musculus (Mouse).